The following is a 151-amino-acid chain: 6,7-dimethyl-8-ribityllumazine synthase (151 aa).

Residues Phe-15, 47-49 (TFE), and 71-73 (AVI) contribute to the 5-amino-6-(D-ribitylamino)uracil site. Residue 76–77 (ET) coordinates (2S)-2-hydroxy-3-oxobutyl phosphate. Residue His-79 is the Proton donor of the active site. Leu-104 is a 5-amino-6-(D-ribitylamino)uracil binding site. Arg-119 is a binding site for (2S)-2-hydroxy-3-oxobutyl phosphate.

This sequence belongs to the DMRL synthase family.

The enzyme catalyses (2S)-2-hydroxy-3-oxobutyl phosphate + 5-amino-6-(D-ribitylamino)uracil = 6,7-dimethyl-8-(1-D-ribityl)lumazine + phosphate + 2 H2O + H(+). Its pathway is cofactor biosynthesis; riboflavin biosynthesis; riboflavin from 2-hydroxy-3-oxobutyl phosphate and 5-amino-6-(D-ribitylamino)uracil: step 1/2. Functionally, catalyzes the formation of 6,7-dimethyl-8-ribityllumazine by condensation of 5-amino-6-(D-ribitylamino)uracil with 3,4-dihydroxy-2-butanone 4-phosphate. This is the penultimate step in the biosynthesis of riboflavin. In Metallosphaera sedula (strain ATCC 51363 / DSM 5348 / JCM 9185 / NBRC 15509 / TH2), this protein is 6,7-dimethyl-8-ribityllumazine synthase.